Reading from the N-terminus, the 568-residue chain is Oxygen-dependent choline dehydrogenase (568 aa).

8–37 (DYIIIGAGSAGNTLAARLTEDAGVTVLLLE) lines the FAD pocket. The active-site Proton acceptor is His477.

Belongs to the GMC oxidoreductase family. It depends on FAD as a cofactor.

The enzyme catalyses choline + A = betaine aldehyde + AH2. It catalyses the reaction betaine aldehyde + NAD(+) + H2O = glycine betaine + NADH + 2 H(+). It participates in amine and polyamine biosynthesis; betaine biosynthesis via choline pathway; betaine aldehyde from choline (cytochrome c reductase route): step 1/1. Involved in the biosynthesis of the osmoprotectant glycine betaine. Catalyzes the oxidation of choline to betaine aldehyde and betaine aldehyde to glycine betaine at the same rate. The polypeptide is Oxygen-dependent choline dehydrogenase (Pseudomonas syringae pv. syringae (strain B728a)).